The sequence spans 475 residues: Ribulose bisphosphate carboxylase large chain (475 aa).

The propeptide occupies 1-2 (MS). Pro3 is subject to N-acetylproline. At Lys14 the chain carries N6,N6,N6-trimethyllysine. 2 residues coordinate substrate: Asn123 and Thr173. Catalysis depends on Lys175, which acts as the Proton acceptor. A substrate-binding site is contributed by Lys177. Positions 201, 203, and 204 each coordinate Mg(2+). Residue Lys201 is modified to N6-carboxylysine. The active-site Proton acceptor is His294. The substrate site is built by Arg295, His327, and Ser379.

It belongs to the RuBisCO large chain family. Type I subfamily. In terms of assembly, heterohexadecamer of 8 large chains and 8 small chains; disulfide-linked. The disulfide link is formed within the large subunit homodimers. Mg(2+) serves as cofactor. The disulfide bond which can form in the large chain dimeric partners within the hexadecamer appears to be associated with oxidative stress and protein turnover.

The protein localises to the plastid. Its subcellular location is the chloroplast. It carries out the reaction 2 (2R)-3-phosphoglycerate + 2 H(+) = D-ribulose 1,5-bisphosphate + CO2 + H2O. The enzyme catalyses D-ribulose 1,5-bisphosphate + O2 = 2-phosphoglycolate + (2R)-3-phosphoglycerate + 2 H(+). RuBisCO catalyzes two reactions: the carboxylation of D-ribulose 1,5-bisphosphate, the primary event in carbon dioxide fixation, as well as the oxidative fragmentation of the pentose substrate in the photorespiration process. Both reactions occur simultaneously and in competition at the same active site. The chain is Ribulose bisphosphate carboxylase large chain from Afrocarpus gracilior (African fern pine).